We begin with the raw amino-acid sequence, 517 residues long: Serine hydroxymethyltransferase 2, mitochondrial (517 aa).

The transit peptide at 1–31 directs the protein to the mitochondrion; that stretch reads MAMASALRRLSSSSNKPLQRLFNGGHLYSMS. Lysine 287 carries the N6-(pyridoxal phosphate)lysine modification.

Belongs to the SHMT family. As to quaternary structure, homotetramer. Pyridoxal 5'-phosphate is required as a cofactor.

It localises to the mitochondrion. The enzyme catalyses (6R)-5,10-methylene-5,6,7,8-tetrahydrofolate + glycine + H2O = (6S)-5,6,7,8-tetrahydrofolate + L-serine. It functions in the pathway one-carbon metabolism; tetrahydrofolate interconversion. Functionally, catalyzes the interconversion of serine and glycine. This is Serine hydroxymethyltransferase 2, mitochondrial from Flaveria pringlei.